We begin with the raw amino-acid sequence, 195 residues long: Imidazoleglycerol-phosphate dehydratase (195 aa).

Belongs to the imidazoleglycerol-phosphate dehydratase family.

It is found in the cytoplasm. The enzyme catalyses D-erythro-1-(imidazol-4-yl)glycerol 3-phosphate = 3-(imidazol-4-yl)-2-oxopropyl phosphate + H2O. The protein operates within amino-acid biosynthesis; L-histidine biosynthesis; L-histidine from 5-phospho-alpha-D-ribose 1-diphosphate: step 6/9. This chain is Imidazoleglycerol-phosphate dehydratase, found in Thermotoga maritima (strain ATCC 43589 / DSM 3109 / JCM 10099 / NBRC 100826 / MSB8).